The sequence spans 385 residues: 8-amino-7-oxononanoate synthase (385 aa).

Arg-21 is a substrate binding site. 108 to 109 is a binding site for pyridoxal 5'-phosphate; it reads GF. His-133 provides a ligand contact to substrate. Pyridoxal 5'-phosphate is bound by residues Ser-179, His-207, and Thr-233. Lys-236 bears the N6-(pyridoxal phosphate)lysine mark. Residue Thr-352 participates in substrate binding.

The protein belongs to the class-II pyridoxal-phosphate-dependent aminotransferase family. BioF subfamily. As to quaternary structure, homodimer. Requires pyridoxal 5'-phosphate as cofactor.

The enzyme catalyses 6-carboxyhexanoyl-[ACP] + L-alanine + H(+) = (8S)-8-amino-7-oxononanoate + holo-[ACP] + CO2. It participates in cofactor biosynthesis; biotin biosynthesis. Catalyzes the decarboxylative condensation of pimeloyl-[acyl-carrier protein] and L-alanine to produce 8-amino-7-oxononanoate (AON), [acyl-carrier protein], and carbon dioxide. This chain is 8-amino-7-oxononanoate synthase, found in Pseudescherichia vulneris (Escherichia vulneris).